A 382-amino-acid polypeptide reads, in one-letter code: Flap endonuclease 1-B (382 aa).

The tract at residues 1 to 104 (MGIHGLAKLI…GELAKRSERR (104 aa)) is N-domain. Aspartate 34 contacts Mg(2+). DNA is bound by residues arginine 47 and arginine 70. Mg(2+)-binding residues include aspartate 86, glutamate 158, glutamate 160, aspartate 179, and aspartate 181. The tract at residues 122–253 (NIEKFNKRLV…KRAIDLIRQH (132 aa)) is I-domain. Glutamate 158 is a binding site for DNA. Glycine 231 and aspartate 233 together coordinate DNA. Residue aspartate 233 participates in Mg(2+) binding. The interval 336–344 (TQGRLDDFF) is interaction with PCNA. The tract at residues 352 to 382 (STKRKEVESKGSTKKKSKTGGTPAGKFKRGK) is disordered.

The protein belongs to the XPG/RAD2 endonuclease family. FEN1 subfamily. In terms of assembly, interacts with PCNA. Three molecules of fen1 bind to one PCNA trimer with each molecule binding to one PCNA monomer. PCNA stimulates the nuclease activity without altering cleavage specificity. The cofactor is Mg(2+). In terms of processing, phosphorylated. Phosphorylation upon DNA damage induces relocalization to the nuclear plasma.

The protein localises to the nucleus. Its subcellular location is the nucleolus. The protein resides in the nucleoplasm. It is found in the mitochondrion. Structure-specific nuclease with 5'-flap endonuclease and 5'-3' exonuclease activities involved in DNA replication and repair. During DNA replication, cleaves the 5'-overhanging flap structure that is generated by displacement synthesis when DNA polymerase encounters the 5'-end of a downstream Okazaki fragment. It enters the flap from the 5'-end and then tracks to cleave the flap base, leaving a nick for ligation. Also involved in the long patch base excision repair (LP-BER) pathway, by cleaving within the apurinic/apyrimidinic (AP) site-terminated flap. Acts as a genome stabilization factor that prevents flaps from equilibrating into structures that lead to duplications and deletions. Also possesses 5'-3' exonuclease activity on nicked or gapped double-stranded DNA, and exhibits RNase H activity. Also involved in replication and repair of rDNA and in repairing mitochondrial DNA. The polypeptide is Flap endonuclease 1-B (fen1-b) (Xenopus laevis (African clawed frog)).